The chain runs to 152 residues: UPF0179 protein HQ_3004A (152 aa).

This sequence belongs to the UPF0179 family.

The polypeptide is UPF0179 protein HQ_3004A (Haloquadratum walsbyi (strain DSM 16790 / HBSQ001)).